The chain runs to 243 residues: Adenosylcobinamide-GDP ribazoletransferase (243 aa).

Helical transmembrane passes span 31-51, 61-81, 109-129, 134-154, and 188-208; these read LLWY…AHLL, AAII…DGLA, IAVV…LSLL, GIYL…LLAT, and LLLG…FVWL.

This sequence belongs to the CobS family. It depends on Mg(2+) as a cofactor.

It is found in the cell inner membrane. It carries out the reaction alpha-ribazole + adenosylcob(III)inamide-GDP = adenosylcob(III)alamin + GMP + H(+). The enzyme catalyses alpha-ribazole 5'-phosphate + adenosylcob(III)inamide-GDP = adenosylcob(III)alamin 5'-phosphate + GMP + H(+). The protein operates within cofactor biosynthesis; adenosylcobalamin biosynthesis; adenosylcobalamin from cob(II)yrinate a,c-diamide: step 7/7. Its function is as follows. Joins adenosylcobinamide-GDP and alpha-ribazole to generate adenosylcobalamin (Ado-cobalamin). Also synthesizes adenosylcobalamin 5'-phosphate from adenosylcobinamide-GDP and alpha-ribazole 5'-phosphate. This is Adenosylcobinamide-GDP ribazoletransferase from Ectopseudomonas mendocina (strain ymp) (Pseudomonas mendocina).